Consider the following 245-residue polypeptide: Pyridoxine 5'-phosphate synthase (245 aa).

Asn7 contacts 3-amino-2-oxopropyl phosphate. Asp9–His10 contacts 1-deoxy-D-xylulose 5-phosphate. Arg18 lines the 3-amino-2-oxopropyl phosphate pocket. The Proton acceptor role is filled by His43. 1-deoxy-D-xylulose 5-phosphate-binding residues include Arg45 and His50. Glu70 serves as the catalytic Proton acceptor. Residue Thr100 coordinates 1-deoxy-D-xylulose 5-phosphate. The active-site Proton donor is the His190. 3-amino-2-oxopropyl phosphate is bound by residues Gly191 and Gly212 to His213.

This sequence belongs to the PNP synthase family. As to quaternary structure, homooctamer; tetramer of dimers.

The protein resides in the cytoplasm. The catalysed reaction is 3-amino-2-oxopropyl phosphate + 1-deoxy-D-xylulose 5-phosphate = pyridoxine 5'-phosphate + phosphate + 2 H2O + H(+). It participates in cofactor biosynthesis; pyridoxine 5'-phosphate biosynthesis; pyridoxine 5'-phosphate from D-erythrose 4-phosphate: step 5/5. Its function is as follows. Catalyzes the complicated ring closure reaction between the two acyclic compounds 1-deoxy-D-xylulose-5-phosphate (DXP) and 3-amino-2-oxopropyl phosphate (1-amino-acetone-3-phosphate or AAP) to form pyridoxine 5'-phosphate (PNP) and inorganic phosphate. The chain is Pyridoxine 5'-phosphate synthase from Prochlorococcus marinus (strain NATL1A).